The following is a 261-amino-acid chain: Proliferating cell nuclear antigen (261 aa).

Residues Val7–Ala100 form an interaction with NUDT15 region. An N6-acetyllysine mark is found at Lys14, Lys77, and Lys80. A DNA-binding region spans residues Arg61–Lys80. Residues Cys135 and Cys162 are joined by a disulfide bond. Residue Lys164 forms a Glycyl lysine isopeptide (Lys-Gly) (interchain with G-Cter in SUMO2); alternate linkage. Residue Lys164 forms a Glycyl lysine isopeptide (Lys-Gly) (interchain with G-Cter in ubiquitin); alternate linkage. Tyr211 bears the Phosphotyrosine; by EGFR mark. The residue at position 248 (Lys248) is an N6-acetyllysine. Lys254 is covalently cross-linked (Glycyl lysine isopeptide (Lys-Gly) (interchain with G-Cter in SUMO2)).

It belongs to the PCNA family. Homotrimer. Interacts with p300/EP300; the interaction occurs on chromatin in UV-irradiated damaged cells. Interacts with CREBBP (via transactivation domain and C-terminus); the interaction occurs on chromatin in UV-irradiated damaged cells. Directly interacts with POLD1, POLD3 and POLD4 subunits of the DNA polymerase delta complex, POLD3 being the major interacting partner; the interaction with POLD3 is inhibited by CDKN1A/p21(CIP1). Forms a complex with activator 1 heteropentamer in the presence of ATP. Interacts with EXO1, POLH, POLK, DNMT1, ERCC5, FEN1, CDC6 and POLDIP2. Interacts with POLB. Interacts with APEX2; this interaction is triggered by reactive oxygen species and increased by misincorporation of uracil in nuclear DNA. Forms a ternary complex with DNTTIP2 and core histone. Interacts with KCTD10 and PPP1R15A. Interacts with SMARCA5/SNF2H. Interacts with BAZ1B/WSTF; the interaction is direct and is required for BAZ1B/WSTF binding to replication foci during S phase. Interacts with HLTF and SHPRH. Interacts with NUDT15; this interaction is disrupted in response to UV irradiation and acetylation. Interacts with CDKN1A/p21(CIP1) and CDT1; interacts via their PIP-box which also recruits the DCX(DTL) complex. The interaction with CDKN1A inhibits POLD3 binding. Interacts with DDX11. Interacts with EGFR; positively regulates PCNA. Interacts with PARPBP. Interacts (when ubiquitinated) with SPRTN; leading to enhance RAD18-mediated PCNA ubiquitination. Interacts (when polyubiquitinated) with ZRANB3. Interacts with SMARCAD1. Interacts with CDKN1C. Interacts with PCLAF (via PIP-box). Interacts with RTEL1 (via PIP-box); the interaction is direct and essential for the suppression of telomere fragility. Interacts with FAM111A (via PIP-box); the interaction is direct and required for PCNA loading on chromatin binding. Interacts with LIG1. Interacts with SETMAR. Interacts with ANKRD17. Interacts with FBXO18/FBH1 (via PIP-box); the interaction recruits the DCX(DTL) complex and promotes ubiquitination and degradation of FBXO18/FBH1. Interacts with POLN. Interacts with SDE2 (via PIP-box); the interaction is direct and prevents ultraviolet light induced monoubiquitination. Component of the replisome complex composed of at least DONSON, MCM2, MCM7, PCNA and TICRR; interaction at least with PCNA occurs during DNA replication. Interacts with MAPK15; the interaction is chromatin binding dependent and prevents MDM2-mediated PCNA destruction by inhibiting the association of PCNA with MDM2. Interacts with PARP10 (via PIP-box). Interacts with DDI2. Interacts with HMCES (via PIP-box). Interacts with TRAIP (via PIP-box). Interacts with UHRF2. Interacts with ALKBH2; this interaction is enhanced during the S-phase of the cell cycle. Interacts with ATAD5; the interaction promotes USP1-mediated PCNA deubiquitination. Interacts with DNA damage up-regulated protein DDUP. Interacts (when phosphorylated) with GRB2. Interacts with ANG. Interacts with nuclear UNG (isoform 2); this interaction mediates UNG recruitment to S-phase replication foci. Interacts with ERCC6L2 (via an atypical PIP-box); this interaction facilitates cenrtomeric localization of ERCC6L2. In terms of assembly, (Microbial infection) Interacts with herpes virus 8 protein LANA1. Post-translationally, phosphorylated. Phosphorylation at Tyr-211 by EGFR stabilizes chromatin-associated PCNA. In terms of processing, acetylated by CREBBP and p300/EP300; preferentially acetylated by CREBBP on Lys-80, Lys-13 and Lys-14 and on Lys-77 by p300/EP300 upon loading on chromatin in response to UV irradiation. Lysine acetylation disrupts association with chromatin, hence promoting PCNA ubiquitination and proteasomal degradation in response to UV damage in a CREBBP- and EP300-dependent manner. Acetylation disrupts interaction with NUDT15 and promotes degradation. Ubiquitinated. Following DNA damage, can be either monoubiquitinated to stimulate direct bypass of DNA lesions by specialized DNA polymerases or polyubiquitinated to promote recombination-dependent DNA synthesis across DNA lesions by template switching mechanisms. Following induction of replication stress, monoubiquitinated by the UBE2B-RAD18 complex on Lys-164, leading to recruit translesion (TLS) polymerases, which are able to synthesize across DNA lesions in a potentially error-prone manner. An error-free pathway also exists and requires non-canonical polyubiquitination on Lys-164 through 'Lys-63' linkage of ubiquitin moieties by the E2 complex UBE2N-UBE2V2 and the E3 ligases, HLTF, RNF8 and SHPRH. This error-free pathway, also known as template switching, employs recombination mechanisms to synthesize across the lesion, using as a template the undamaged, newly synthesized strand of the sister chromatid. Monoubiquitination at Lys-164 also takes place in undamaged proliferating cells, and is mediated by the DCX(DTL) complex, leading to enhance PCNA-dependent translesion DNA synthesis. Sumoylated during S phase. Post-translationally, methylated on glutamate residues by ARMT1/C6orf211.

Its subcellular location is the nucleus. Its function is as follows. Auxiliary protein of DNA polymerase delta and epsilon, is involved in the control of eukaryotic DNA replication by increasing the polymerase's processibility during elongation of the leading strand. Induces a robust stimulatory effect on the 3'-5' exonuclease and 3'-phosphodiesterase, but not apurinic-apyrimidinic (AP) endonuclease, APEX2 activities. Has to be loaded onto DNA in order to be able to stimulate APEX2. Plays a key role in DNA damage response (DDR) by being conveniently positioned at the replication fork to coordinate DNA replication with DNA repair and DNA damage tolerance pathways. Acts as a loading platform to recruit DDR proteins that allow completion of DNA replication after DNA damage and promote postreplication repair: Monoubiquitinated PCNA leads to recruitment of translesion (TLS) polymerases, while 'Lys-63'-linked polyubiquitination of PCNA is involved in error-free pathway and employs recombination mechanisms to synthesize across the lesion. The protein is Proliferating cell nuclear antigen (PCNA) of Homo sapiens (Human).